The sequence spans 641 residues: SUMO-activating enzyme subunit 2-A (641 aa).

ATP is bound by residues 24 to 29 (GAGGIG), Asp48, 56 to 59 (NLNR), Lys72, 95 to 96 (SI), and 117 to 122 (DNNAAR). Zn(2+) contacts are provided by Cys158 and Cys161. Residue Cys173 is the Glycyl thioester intermediate of the active site. Positions 439 and 442 each coordinate Zn(2+). A disordered region spans residues 546 to 641 (GDVPEKGPQK…EEDDDIIALD (96 aa)). Residues 548–561 (VPEKGPQKPPEESV) show a composition bias toward basic and acidic residues. The span at 562–579 (KNITNGSDDGAQPSTSKA) shows a compositional bias: polar residues. Composition is skewed to acidic residues over residues 582 to 594 (QDDVLIVDSDEES) and 630 to 641 (PVEEDDDIIALD).

This sequence belongs to the ubiquitin-activating E1 family. In terms of assembly, heterodimer of sae1 and uba2/sae2. The heterodimer corresponds to the two domains that are encoded on a single polypeptide chain in ubiquitin-activating enzyme E1. Interacts with ube2i.

It localises to the nucleus. The protein operates within protein modification; protein sumoylation. In terms of biological role, the heterodimer acts as an E1 ligase for sumo1, sumo2, and sumo3. It mediates ATP-dependent activation of sumo proteins followed by formation of a thioester bond between a sumo protein and a conserved active site cysteine residue on uba2/sae2. In Xenopus laevis (African clawed frog), this protein is SUMO-activating enzyme subunit 2-A (uba2-a).